A 414-amino-acid chain; its full sequence is Serine/arginine (SR)-type shuttling mRNA binding protein NPL3 (414 aa).

The segment covering M1–Q11 has biased composition (basic and acidic residues). Residues M1 to E119 form a disordered region. Residue S15 is modified to Phosphoserine. Low complexity predominate over residues D33–P51. Over residues Q52–N68 the composition is skewed to pro residues. Residues E75–P92 show a composition bias toward basic and acidic residues. A Phosphoserine modification is found at S79. Residues P93–G105 show a composition bias toward pro residues. RRM domains are found at residues T125–L195 and Y200–N275. S182, S212, and S224 each carry phosphoserine. The interval T269–G299 is disordered. A compositionally biased stretch (gly residues) spans G286–G299. Residues R288, R290, R294, and R298 each carry the dimethylated arginine modification. R302 carries the post-translational modification Omega-N-methylarginine. 2 positions are modified to dimethylated arginine; alternate: R307 and R314. Residues R307 and R314 each carry the omega-N-methylarginine; alternate modification. R321, R329, R337, and R344 each carry omega-N-methylarginine. The disordered stretch occupies residues S343–R414. The span at G346–G360 shows a compositional bias: low complexity. R351 bears the Dimethylated arginine; alternate mark. Omega-N-methylarginine; alternate is present on R351. S356 is subject to Phosphoserine. Dimethylated arginine; alternate is present on residues R358, R363, R377, and R384. Omega-N-methylarginine; alternate is present on residues R358, R363, R377, and R384. Gly residues predominate over residues S379 to G389. An Omega-N-methylarginine modification is found at R391. Basic and acidic residues predominate over residues D399–R414.

Belongs to the RRM GAR family. Interacts with RRP6. In terms of processing, methylated by HMT1. The methylation is required for nuclear export.

Its subcellular location is the cytoplasm. It is found in the nucleus. The protein resides in the stress granule. Involved in mRNA processing and export. Required for efficient splicing of a large set of pre-mRNAs by efficient co-transcriptional recruitment of the splicing machinery. Remains associated with the mRNP during early steps of translation elongation. This chain is Serine/arginine (SR)-type shuttling mRNA binding protein NPL3, found in Saccharomyces cerevisiae (strain ATCC 204508 / S288c) (Baker's yeast).